Reading from the N-terminus, the 356-residue chain is DNA polymerase IV (356 aa).

Residues 7-188 (IIHIDMDCFY…LPLKKISGVG (182 aa)) form the UmuC domain. 2 residues coordinate Mg(2+): D11 and D106. Residue E107 is part of the active site.

The protein belongs to the DNA polymerase type-Y family. In terms of assembly, monomer. The cofactor is Mg(2+).

The protein resides in the cytoplasm. The enzyme catalyses DNA(n) + a 2'-deoxyribonucleoside 5'-triphosphate = DNA(n+1) + diphosphate. Its function is as follows. Poorly processive, error-prone DNA polymerase involved in untargeted mutagenesis. Copies undamaged DNA at stalled replication forks, which arise in vivo from mismatched or misaligned primer ends. These misaligned primers can be extended by PolIV. Exhibits no 3'-5' exonuclease (proofreading) activity. May be involved in translesional synthesis, in conjunction with the beta clamp from PolIII. The protein is DNA polymerase IV of Glaesserella parasuis serovar 5 (strain SH0165) (Haemophilus parasuis).